Here is a 200-residue protein sequence, read N- to C-terminus: HTH-type transcriptional regulator Hpr (200 aa).

Positions 13–157 constitute an HTH marR-type domain; it reads AMLFSQRIAQ…MMCIVRNIYG (145 aa). Positions 63 to 86 form a DNA-binding region, H-T-H motif; the sequence is ISEIAKFGVMHVSTAFNFSKKLEE.

Homodimer.

Its function is as follows. Negative regulator of protease production and sporulation. The sequence is that of HTH-type transcriptional regulator Hpr from Geobacillus thermodenitrificans (strain NG80-2).